The chain runs to 248 residues: PF03932 family protein CutC (248 aa).

This sequence belongs to the CutC family. Homodimer.

It localises to the cytoplasm. The polypeptide is PF03932 family protein CutC (Salmonella newport (strain SL254)).